The chain runs to 101 residues: Interleukin-8 (101 aa).

The signal sequence occupies residues methionine 1–glycine 22. Arginine 27 is subject to Citrulline. Disulfide bonds link cysteine 34-cysteine 61 and cysteine 36-cysteine 77.

This sequence belongs to the intercrine alpha (chemokine CxC) family. As to quaternary structure, homodimer. Interacts with TNFAIP6 (via Link domain); this interaction interferes with chemokine binding to glycosaminoglycans. Post-translationally, citrullination at Arg-27 prevents proteolysis, and dampens tissue inflammation, it also enhances leukocytosis, possibly through impaired chemokine clearance from the blood circulation.

It is found in the secreted. Its function is as follows. Chemotactic factor that mediates inflammatory response by attracting neutrophils, basophils, and T-cells to clear pathogens and protect the host from infection. Also plays an important role in neutrophil activation. Released in response to an inflammatory stimulus, exerts its effect by binding to the G-protein-coupled receptors CXCR1 and CXCR2, primarily found in neutrophils, monocytes and endothelial cells. G-protein heterotrimer (alpha, beta, gamma subunits) constitutively binds to CXCR1/CXCR2 receptor and activation by IL8 leads to beta and gamma subunits release from Galpha (GNAI2 in neutrophils) and activation of several downstream signaling pathways including PI3K and MAPK pathways. This Cercocebus atys (Sooty mangabey) protein is Interleukin-8 (CXCL8).